Reading from the N-terminus, the 357-residue chain is Histidinol-phosphate aminotransferase 1 (357 aa).

Lysine 210 carries the N6-(pyridoxal phosphate)lysine modification.

Belongs to the class-II pyridoxal-phosphate-dependent aminotransferase family. Histidinol-phosphate aminotransferase subfamily. Homodimer. Pyridoxal 5'-phosphate is required as a cofactor.

The enzyme catalyses L-histidinol phosphate + 2-oxoglutarate = 3-(imidazol-4-yl)-2-oxopropyl phosphate + L-glutamate. Its pathway is amino-acid biosynthesis; L-histidine biosynthesis; L-histidine from 5-phospho-alpha-D-ribose 1-diphosphate: step 7/9. The protein is Histidinol-phosphate aminotransferase 1 of Methylococcus capsulatus (strain ATCC 33009 / NCIMB 11132 / Bath).